A 263-amino-acid chain; its full sequence is Isoprenyl transferase (263 aa).

The active site involves Asp38. Asp38 lines the Mg(2+) pocket. Substrate-binding positions include 39 to 42 (GNRR), His55, and 83 to 85 (STD). Catalysis depends on Asn86, which acts as the Proton acceptor. Residues Phe87, Arg89, Arg212, and 218–220 (RLS) contribute to the substrate site. Glu231 contacts Mg(2+).

The protein belongs to the UPP synthase family. In terms of assembly, homodimer. Mg(2+) is required as a cofactor.

Functionally, catalyzes the condensation of isopentenyl diphosphate (IPP) with allylic pyrophosphates generating different type of terpenoids. This Thermus thermophilus (strain ATCC BAA-163 / DSM 7039 / HB27) protein is Isoprenyl transferase.